A 1317-amino-acid chain; its full sequence is Nucleoporin NUP145 (1317 aa).

Positions 1–16 are enriched in polar residues; that stretch reads MFNKSVNSGFTFGNQN. Positions 1-36 are disordered; the sequence is MFNKSVNSGFTFGNQNTSTPTSTPAQPSSSLQFPQK. The FG 1 repeat unit spans residues 12–13; the sequence is FG. Low complexity predominate over residues 17-30; sequence TSTPTSTPAQPSSS. A GLFG 1 repeat occupies 39-42; that stretch reads GLFG. One copy of the FG 2 repeat lies at 79–80; it reads FG. A GLFG 2 repeat occupies 89-92; it reads GLFG. The FG 3 repeat unit spans residues 106-107; the sequence is FG. Residues 133 to 165 are disordered; sequence QNGGLFGNSNNNNITSTTQNGGLFGKPTTTPAG. 4 GLFG repeats span residues 136-139, 154-157, 168-171, and 181-184; these read GLFG. The segment covering 139-164 has biased composition (low complexity); the sequence is GNSNNNNITSTTQNGGLFGKPTTTPA. The GLFG 7; approximate repeat unit spans residues 193 to 196; that stretch reads GIFG. A GLFG 8 repeat occupies 206–209; it reads GLFG. The tract at residues 249–278 is disordered; the sequence is TSSLSDVNGKSDAEPKPIENRRTYSFSSSV. Basic and acidic residues predominate over residues 257 to 270; sequence GKSDAEPKPIENRR. A Phosphoserine modification is found at serine 273. The Bipartite nuclear localization signal motif lies at 369–385; that stretch reads RKLKIDSNRSAAKKLKL. The interval 390–450 is disordered; it reads PAITKKHMQD…NLNKQDGENT (61 aa). Positions 398-523 are required for autocatalytic cleavage; sequence QDEQDSSENE…FGKIVIFRSS (126 aa). A phosphoserine mark is found at serine 403, serine 404, and serine 414. The span at 418 to 427 shows a compositional bias: basic and acidic residues; sequence IDRKENRDNN. Polar residues predominate over residues 428–444; it reads LDNTYLNGKEQSNNLNK. A Peptidase S59 domain is found at 458 to 605; sequence SFGYWCSPSP…GTWTFKVNHF (148 aa). Residues 460-604 are nucleoporin RNA-binding motif (NRM); sequence GYWCSPSPEQ…GGTWTFKVNH (145 aa). Phosphoserine is present on residues serine 667, serine 679, and serine 689. Threonine 751 is subject to Phosphothreonine.

This sequence belongs to the nucleoporin GLFG family. Component of the nuclear pore complex (NPC). NPC constitutes the exclusive means of nucleocytoplasmic transport. NPCs allow the passive diffusion of ions and small molecules and the active, nuclear transport receptor-mediated bidirectional transport of macromolecules such as proteins, RNAs, ribonucleoparticles (RNPs), and ribosomal subunits across the nuclear envelope. Due to its 8-fold rotational symmetry, all subunits are present with 8 copies or multiples thereof. NUP145C is part of the heptameric 0.5 MDa autoassembling NUP84 NPC subcomplex (NUP84, NUP85, NUP120, NUP133, NUP145C, SEC13 and SEH1). NUP145N may bind homomeric RNA and interacts through its FG repeats with karyopherins. Interacts with MLP1 and MLP2. Post-translationally, NUP145 is autocatalytically cleaved in NUP145N and NUP145C.

Its subcellular location is the nucleus. The protein localises to the nuclear pore complex. The protein resides in the nucleus membrane. Its function is as follows. Functions as a component of the nuclear pore complex (NPC). NPC components, collectively referred to as nucleoporins (NUPs), can play the role of both NPC structural components and of docking or interaction partners for transiently associated nuclear transport factors. Active directional transport is assured by both, a Phe-Gly (FG) repeat affinity gradient for these transport factors across the NPC and a transport cofactor concentration gradient across the nuclear envelope (GSP1 and GSP2 GTPases associated predominantly with GTP in the nucleus, with GDP in the cytoplasm). NUP145 is autocatalytically cleaved in vivo in 2 polypeptides which assume different functions in the NPC. NUP145N as one of the FG repeat nucleoporins participates in karyopherin interactions and contains part of the autocatalytic cleavage activity. NUP145C as part of the NUP84 complex is involved in nuclear poly(A)+ RNA and tRNA export. It is also required for normal NPC distribution (probably through interactions with MLP1 and MLP2) and NPC assembly, as well as for normal nuclear envelope organization. This chain is Nucleoporin NUP145 (NUP145), found in Saccharomyces cerevisiae (strain ATCC 204508 / S288c) (Baker's yeast).